A 108-amino-acid chain; its full sequence is Glutaredoxin-like protein YDR286C homolog (108 aa).

A disulfide bond links Cys-22 and Cys-25.

Belongs to the glutaredoxin family. YDR286C subfamily.

The protein is Glutaredoxin-like protein YDR286C homolog of Dictyostelium discoideum (Social amoeba).